The sequence spans 231 residues: Orotidine 5'-phosphate decarboxylase (231 aa).

Substrate-binding positions include Asp12, Lys34, 61–70 (DMKLLDIDNT), Thr116, Arg177, Gln186, Gly206, and Arg207. Lys63 functions as the Proton donor in the catalytic mechanism.

The protein belongs to the OMP decarboxylase family. Type 1 subfamily. Homodimer.

The catalysed reaction is orotidine 5'-phosphate + H(+) = UMP + CO2. It functions in the pathway pyrimidine metabolism; UMP biosynthesis via de novo pathway; UMP from orotate: step 2/2. Its function is as follows. Catalyzes the decarboxylation of orotidine 5'-monophosphate (OMP) to uridine 5'-monophosphate (UMP). The chain is Orotidine 5'-phosphate decarboxylase from Allorhizobium ampelinum (strain ATCC BAA-846 / DSM 112012 / S4) (Agrobacterium vitis (strain S4)).